A 338-amino-acid polypeptide reads, in one-letter code: MSSQNLERQRIYQVWPAKNKFYCGGRLVFGPDASSLLLTTCMIGGPAIAFSIRMAYLISHRHPFFHSLTLIGAILLTFMAFTFLFLTSSRDPGIIPRNKQVSEAEIPDVTTQSTEWVTSKLGSVKLPRTKDVMVNGFTVKVKFCDTCQLYRPPRAFHCSICNNCVQRFDHHCPWVGQCIALRNYPFFVCFLSCSTLLCIYVFVFSWVSMLKVHGEFYVVLADDLILGVLGLYCFVSVWFVGGLTVFHFYLICTNQTTCENFRYHYDKKENPYRKGILENFKELFFAKIPPPLINFRDWSPEEEDDVEVGSIASELVRAFGPKDTKMSSGKSDSEARER.

Transmembrane regions (helical) follow at residues 32-52 and 68-88; these read DASS…AFSI and LTLI…FLTS. The DHHC domain maps to 142–192; the sequence is KFCDTCQLYRPPRAFHCSICNNCVQRFDHHCPWVGQCIALRNYPFFVCFLS. Cys-172 functions as the S-palmitoyl cysteine intermediate in the catalytic mechanism. Transmembrane regions (helical) follow at residues 186 to 206 and 225 to 245; these read FFVC…VFSW and ILGV…GLTV. The tract at residues 319 to 338 is disordered; it reads FGPKDTKMSSGKSDSEARER. Over residues 320–338 the composition is skewed to basic and acidic residues; it reads GPKDTKMSSGKSDSEARER.

It belongs to the DHHC palmitoyltransferase family.

The protein resides in the endosome membrane. It carries out the reaction L-cysteinyl-[protein] + hexadecanoyl-CoA = S-hexadecanoyl-L-cysteinyl-[protein] + CoA. Its function is as follows. Palmitoyl acyltransferase. This is Probable protein S-acyltransferase 1 (PAT01) from Arabidopsis thaliana (Mouse-ear cress).